We begin with the raw amino-acid sequence, 495 residues long: Ribose import ATP-binding protein RbsA 3 (495 aa).

ABC transporter domains are found at residues 5–240 (VRLR…VGRE) and 250–492 (AEIG…TGVK). ATP is bound at residue 37–44 (GENGAGKS).

The protein belongs to the ABC transporter superfamily. Ribose importer (TC 3.A.1.2.1) family. As to quaternary structure, the complex is composed of an ATP-binding protein (RbsA), two transmembrane proteins (RbsC) and a solute-binding protein (RbsB).

The protein resides in the cell membrane. It catalyses the reaction D-ribose(out) + ATP + H2O = D-ribose(in) + ADP + phosphate + H(+). In terms of biological role, part of the ABC transporter complex RbsABC involved in ribose import. Responsible for energy coupling to the transport system. This is Ribose import ATP-binding protein RbsA 3 from Rubrobacter xylanophilus (strain DSM 9941 / JCM 11954 / NBRC 16129 / PRD-1).